A 185-amino-acid chain; its full sequence is Chromobox protein homolog 1 (185 aa).

Glycyl lysine isopeptide (Lys-Gly) (interchain with G-Cter in SUMO2) cross-links involve residues Lys-9 and Lys-33. Residues 21–79 (YVVEKVLDRRVVKGKVEYLLKWKGFSDEDNTWEPEENLDCPDLIAEFLQSQKTAHETDK) form the Chromo 1 domain. Residues 63-124 (LIAEFLQSQK…RGLEPERIIG (62 aa)) are disordered. Positions 73-89 (TAHETDKSEGGKRKADS) are enriched in basic and acidic residues. Phosphoserine occurs at positions 89 and 91. Residues 96–121 (EESKPKKKKEESEKPRGFARGLEPER) show a composition bias toward basic and acidic residues. Residues Lys-99 and Lys-150 each participate in a glycyl lysine isopeptide (Lys-Gly) (interchain with G-Cter in SUMO2) cross-link. In terms of domain architecture, Chromo 2; shadow subtype spans 117-175 (LEPERIIGATDSSGELMFLMKWKNSDEADLVPAKEANVKCPQVVISFYEERLTWHSYPS). Residue Ser-175 is modified to Phosphoserine.

As to quaternary structure, homodimer. Interacts directly with CHAF1A, EMSY, LBR, TIF1/TIF1A and TRIM28/TIF1B PXVXL motif via the chromoshadow domain. Interacts directly with histone H3 methylated at 'Lys-9' via the chromo domain. Interacts with SUV39H1 and SETDB1, KMT5B and KMT5C. Interacts with PRDM6. Interacts with POGZ. Interacts with CHAMP1. Interacts with INCENP. Interacts with SGO1; the CBX1 homodimer binds to one molecule of SGO1. Interacts with LRIF1 (via PxVxL motif). Interacts with HDGFL2. Interacts with CHD3. Interacts with CHD4. Not phosphorylated. In terms of processing, ubiquitinated. Expressed in all adult and embryonic tissues.

Its subcellular location is the nucleus. In terms of biological role, component of heterochromatin. Recognizes and binds histone H3 tails methylated at 'Lys-9', leading to epigenetic repression. Interaction with lamin B receptor (LBR) can contribute to the association of the heterochromatin with the inner nuclear membrane. In Homo sapiens (Human), this protein is Chromobox protein homolog 1 (CBX1).